We begin with the raw amino-acid sequence, 148 residues long: UPF0178 protein lpl0088 (148 aa).

This sequence belongs to the UPF0178 family.

The polypeptide is UPF0178 protein lpl0088 (Legionella pneumophila (strain Lens)).